A 163-amino-acid polypeptide reads, in one-letter code: MADSSFDIVSKVDHQEVDNALNQAAKELATRFDFRGTDTKIAWKGDEAVELTSSTEERVKAAVDVFKEKLIRRDISMKAFDAGEPQASGKTYKVTGDIKQGISGDDAKKITKLVRDEGPKGVKTQIQGEEIRVTSKKRDDLQTVIAMLKQADLDVALQFVNYR.

This sequence belongs to the YajQ family.

In terms of biological role, nucleotide-binding protein. This Mycobacterium ulcerans (strain Agy99) protein is Nucleotide-binding protein MUL_0671.